Consider the following 280-residue polypeptide: Ribosomal RNA-processing protein 7 homolog A (280 aa).

Residues 1–10 (MVSRRKKRKA) are compositionally biased toward basic residues. Residues 1–24 (MVSRRKKRKAGGHEESIPSPPGYS) form a disordered region. The RRM domain maps to 59–159 (RTLFILNVPP…SGIHKWISDY (101 aa)). Serine 99 is subject to Phosphoserine.

It belongs to the RRP7 family. In terms of assembly, part of the small subunit (SSU) processome, composed of more than 70 proteins and the RNA chaperone small nucleolar RNA (snoRNA) U3. Interacts with NOL6; required for NOL6 localization to nucleolus.

Its subcellular location is the nucleus. It localises to the nucleolus. It is found in the cell projection. The protein resides in the cilium. The protein localises to the cytoplasm. Its subcellular location is the cytoskeleton. It localises to the microtubule organizing center. It is found in the centrosome. In terms of biological role, nucleolar protein that is involved in ribosomal RNA (rRNA) processing. Also plays a role in primary cilia resorption, and cell cycle progression in neurogenesis and neocortex development. Part of the small subunit (SSU) processome, first precursor of the small eukaryotic ribosomal subunit. During the assembly of the SSU processome in the nucleolus, many ribosome biogenesis factors, an RNA chaperone and ribosomal proteins associate with the nascent pre-rRNA and work in concert to generate RNA folding, modifications, rearrangements and cleavage as well as targeted degradation of pre-ribosomal RNA by the RNA exosome. The chain is Ribosomal RNA-processing protein 7 homolog A (Rrp7a) from Mus musculus (Mouse).